Reading from the N-terminus, the 475-residue chain is Lipoprotein lipase (475 aa).

An N-terminal signal peptide occupies residues 1-27; it reads MESKALLLLALAVWLQSLTASRGGVAA. The segment at 32–53 is interaction with GPIHBP1; that stretch reads RDFIDIESKFALRTPEDTAEDT. A disulfide bridge connects residues C54 and C67. N-linked (GlcNAc...) asparagine glycosylation is present at N70. The residue at position 121 (Y121) is a 3'-nitrotyrosine. The active-site Nucleophile is S159. The active-site Charge relay system is D183. Y191 is modified (3'-nitrotyrosine). A194, R197, S199, and D202 together coordinate Ca(2+). The cysteines at positions 243 and 266 are disulfide-linked. An essential for determining substrate specificity region spans residues 243–266; it reads CNIGEAIRVIAERGLGDVDQLVKC. H268 serves as the catalytic Charge relay system. Disulfide bonds link C291/C310 and C302/C305. The region spanning 341–464 is the PLAT domain; sequence FHYQVKIHFS…KGKAPAVFVK (124 aa). The residue at position 343 (Y343) is a 3'-nitrotyrosine. N386 carries an N-linked (GlcNAc...) asparagine glycan. The segment at 417–421 is important for interaction with lipoprotein particles; it reads WSDWW. An important for heparin binding region spans residues 430-434; sequence KIRVK. Residues 443-467 are interaction with GPIHBP1; sequence IFCSREKVSHLQKGKAPAVFVKCHD. C445 and C465 are oxidised to a cystine.

This sequence belongs to the AB hydrolase superfamily. Lipase family. In terms of assembly, homodimer. Interacts with GPIHBP1 with 1:1 stoichiometry. Interacts with APOC2; the interaction activates LPL activity in the presence of lipids. Interaction with heparan sulfate proteoglycans is required to protect LPL against loss of activity. Associates with lipoprotein particles in blood plasma. Interacts with LMF1 and SEL1L; interaction with SEL1L is required to prevent aggregation of newly synthesized LPL in the endoplasmic reticulum (ER), and for normal export of LPL from the ER to the extracellular space. Interacts with SORL1; SORL1 acts as a sorting receptor, promoting LPL localization to endosomes and later to lysosomes, leading to degradation of newly synthesized LPL. In terms of processing, tyrosine nitration after lipopolysaccharide (LPS) challenge down-regulates the lipase activity. Highest levels in the spinal cord.

The protein localises to the cell membrane. Its subcellular location is the secreted. It is found in the extracellular space. It localises to the extracellular matrix. It carries out the reaction a triacylglycerol + H2O = a diacylglycerol + a fatty acid + H(+). The catalysed reaction is a 1,2-diacyl-sn-glycero-3-phosphocholine + H2O = a 2-acyl-sn-glycero-3-phosphocholine + a fatty acid + H(+). The enzyme catalyses 1,2,3-tri-(9Z-octadecenoyl)-glycerol + H2O = di-(9Z)-octadecenoylglycerol + (9Z)-octadecenoate + H(+). It catalyses the reaction 1,2-di-(9Z-octadecenoyl)-sn-glycero-3-phosphocholine + H2O = (9Z-octadecenoyl)-sn-glycero-3-phosphocholine + (9Z)-octadecenoate + H(+). It carries out the reaction 1,2,3-tributanoylglycerol + H2O = dibutanoylglycerol + butanoate + H(+). The catalysed reaction is 1,2-dihexadecanoyl-sn-glycero-3-phosphocholine + H2O = hexadecanoyl-sn-glycero-3-phosphocholine + hexadecanoate + H(+). With respect to regulation, the apolipoprotein APOC2 acts as a coactivator of LPL activity. Ca(2+) binding promotes protein stability and formation of the active homodimer. Interaction with GPIHBP1 protects LPL against inactivation by ANGPTL4. Key enzyme in triglyceride metabolism. Catalyzes the hydrolysis of triglycerides from circulating chylomicrons and very low density lipoproteins (VLDL), and thereby plays an important role in lipid clearance from the blood stream, lipid utilization and storage. Although it has both phospholipase and triglyceride lipase activities it is primarily a triglyceride lipase with low but detectable phospholipase activity. Mediates margination of triglyceride-rich lipoprotein particles in capillaries. Recruited to its site of action on the luminal surface of vascular endothelium by binding to GPIHBP1 and cell surface heparan sulfate proteoglycans. The chain is Lipoprotein lipase (LPL) from Papio anubis (Olive baboon).